The primary structure comprises 347 residues: Protein-arginine kinase (347 aa).

The region spanning 22 to 247 (LVVSTRIRLA…EQVIQAERHA (226 aa)) is the Phosphagen kinase C-terminal domain. Residues 25–29 (STRIR), H85, R118, 169–173 (RASVM), and 200–205 (RGRYGE) each bind ATP. The short motif at 330–335 (RDRERA) is the RDXXRA motif of the pArg binding pocket involved in allosteric regulation element.

Belongs to the ATP:guanido phosphotransferase family.

It carries out the reaction L-arginyl-[protein] + ATP = N(omega)-phospho-L-arginyl-[protein] + ADP + H(+). Its activity is regulated as follows. Appears to be allosterically activated by the binding of pArg-containing polypeptides to the pArg-binding pocket localized in the C-terminal domain of McsB. In terms of biological role, catalyzes the specific phosphorylation of arginine residues in proteins. The protein is Protein-arginine kinase of Exiguobacterium sp. (strain ATCC BAA-1283 / AT1b).